The following is a 357-amino-acid chain: Fructose-bisphosphate aldolase, cytoplasmic isozyme 1 (357 aa).

Substrate contacts are provided by arginine 52 and lysine 142. The Proton acceptor role is filled by glutamate 183. Residue lysine 225 is the Schiff-base intermediate with dihydroxyacetone-P of the active site.

This sequence belongs to the class I fructose-bisphosphate aldolase family.

It localises to the cytoplasm. The enzyme catalyses beta-D-fructose 1,6-bisphosphate = D-glyceraldehyde 3-phosphate + dihydroxyacetone phosphate. It functions in the pathway carbohydrate degradation; glycolysis; D-glyceraldehyde 3-phosphate and glycerone phosphate from D-glucose: step 4/4. The sequence is that of Fructose-bisphosphate aldolase, cytoplasmic isozyme 1 from Pisum sativum (Garden pea).